A 517-amino-acid polypeptide reads, in one-letter code: GMP synthase [glutamine-hydrolyzing] (517 aa).

Residues 9–202 (KIIVLDYGSQ…AFNVCKAKGD (194 aa)) enclose the Glutamine amidotransferase type-1 domain. Cysteine 86 acts as the Nucleophile in catalysis. Residues histidine 176 and glutamate 178 contribute to the active site. Positions 203 to 392 (WSMDSFIDME…LGMPDEIVWR (190 aa)) constitute a GMPS ATP-PPase domain. 230 to 236 (SGGVDSS) provides a ligand contact to ATP.

In terms of assembly, homodimer.

It catalyses the reaction XMP + L-glutamine + ATP + H2O = GMP + L-glutamate + AMP + diphosphate + 2 H(+). The protein operates within purine metabolism; GMP biosynthesis; GMP from XMP (L-Gln route): step 1/1. Functionally, catalyzes the synthesis of GMP from XMP. This is GMP synthase [glutamine-hydrolyzing] from Streptococcus mutans serotype c (strain ATCC 700610 / UA159).